Here is a 174-residue protein sequence, read N- to C-terminus: N-terminal acetyltransferase B complex catalytic subunit NAA20 (174 aa).

One can recognise an N-acetyltransferase domain in the interval 2–151 (TTIRRFSCND…DGLDMRKALS (150 aa)).

This sequence belongs to the acetyltransferase family. ARD1 subfamily.

It catalyses the reaction N-terminal L-methionyl-L-asparaginyl-[protein] + acetyl-CoA = N-terminal N(alpha)-acetyl-L-methionyl-L-asparaginyl-[protein] + CoA + H(+). It carries out the reaction N-terminal L-methionyl-L-glutaminyl-[protein] + acetyl-CoA = N-terminal N(alpha)-acetyl-L-methionyl-L-glutaminyl-[protein] + CoA + H(+). The enzyme catalyses N-terminal L-methionyl-L-aspartyl-[protein] + acetyl-CoA = N-terminal N(alpha)-acetyl-L-methionyl-L-aspartyl-[protein] + CoA + H(+). The catalysed reaction is N-terminal L-methionyl-L-glutamyl-[protein] + acetyl-CoA = N-terminal N(alpha)-acetyl-L-methionyl-L-glutamyl-[protein] + CoA + H(+). In terms of biological role, catalytic subunit of the NatB N-alpha-acetyltransferase complex. Involved in plant immunity through the regulation of SNC1 stability. This chain is N-terminal acetyltransferase B complex catalytic subunit NAA20, found in Arabidopsis thaliana (Mouse-ear cress).